Here is an 83-residue protein sequence, read N- to C-terminus: MSGNTGERSFADIITSIRYWVIHSITIPSLFIAGWLFVSTGLAYDVFGSPRPNEYFTENRQGIPLITGRFDPLEQLDEFSRSF.

The chain crosses the membrane as a helical span at residues 21 to 35 (VIHSITIPSLFIAGW). Residue His-23 coordinates heme.

The protein belongs to the PsbE/PsbF family. As to quaternary structure, heterodimer of an alpha subunit and a beta subunit. PSII is composed of 1 copy each of membrane proteins PsbA, PsbB, PsbC, PsbD, PsbE, PsbF, PsbH, PsbI, PsbJ, PsbK, PsbL, PsbM, PsbT, PsbX, PsbY, PsbZ, Psb30/Ycf12, at least 3 peripheral proteins of the oxygen-evolving complex and a large number of cofactors. It forms dimeric complexes. Heme b serves as cofactor.

The protein resides in the plastid. The protein localises to the chloroplast thylakoid membrane. In terms of biological role, this b-type cytochrome is tightly associated with the reaction center of photosystem II (PSII). PSII is a light-driven water:plastoquinone oxidoreductase that uses light energy to abstract electrons from H(2)O, generating O(2) and a proton gradient subsequently used for ATP formation. It consists of a core antenna complex that captures photons, and an electron transfer chain that converts photonic excitation into a charge separation. This chain is Cytochrome b559 subunit alpha, found in Panax ginseng (Korean ginseng).